Reading from the N-terminus, the 282-residue chain is Undecaprenyl-diphosphatase (282 aa).

A run of 8 helical transmembrane segments spans residues 1–21 (MTLI…FLPI), 39–59 (PGAA…MLYF), 85–105 (AKMG…GLLF), 115–135 (SLYW…LAEW), 153–173 (IGWK…IPGS), 193–213 (AARF…AFEL), 229–249 (NLAV…AFLL), and 259–279 (IFIA…GGGT).

This sequence belongs to the UppP family.

It localises to the cell inner membrane. The enzyme catalyses di-trans,octa-cis-undecaprenyl diphosphate + H2O = di-trans,octa-cis-undecaprenyl phosphate + phosphate + H(+). Its function is as follows. Catalyzes the dephosphorylation of undecaprenyl diphosphate (UPP). Confers resistance to bacitracin. In Chlorobium luteolum (strain DSM 273 / BCRC 81028 / 2530) (Pelodictyon luteolum), this protein is Undecaprenyl-diphosphatase.